Reading from the N-terminus, the 143-residue chain is Transcriptional regulator MraZ (143 aa).

SpoVT-AbrB domains lie at 5–47 (EFQH…TLTE) and 76–119 (AVEV…DRKL).

This sequence belongs to the MraZ family. In terms of assembly, forms oligomers.

The protein localises to the cytoplasm. It is found in the nucleoid. In Macrococcus caseolyticus (strain JCSC5402) (Macrococcoides caseolyticum), this protein is Transcriptional regulator MraZ.